A 124-amino-acid polypeptide reads, in one-letter code: Small ribosomal subunit protein uS12 (124 aa).

The segment at 1–22 (MATINQLVRKPRSRKVAKSDVP) is disordered. Position 89 is a 3-methylthioaspartic acid (Asp-89). The disordered stretch occupies residues 104 to 124 (TAGVNDRRQGRSKYGAKRGKS). The segment covering 113-124 (GRSKYGAKRGKS) has biased composition (basic residues).

It belongs to the universal ribosomal protein uS12 family. As to quaternary structure, part of the 30S ribosomal subunit. Contacts proteins S8 and S17. May interact with IF1 in the 30S initiation complex.

With S4 and S5 plays an important role in translational accuracy. Functionally, interacts with and stabilizes bases of the 16S rRNA that are involved in tRNA selection in the A site and with the mRNA backbone. Located at the interface of the 30S and 50S subunits, it traverses the body of the 30S subunit contacting proteins on the other side and probably holding the rRNA structure together. The combined cluster of proteins S8, S12 and S17 appears to hold together the shoulder and platform of the 30S subunit. This Hahella chejuensis (strain KCTC 2396) protein is Small ribosomal subunit protein uS12.